Reading from the N-terminus, the 477-residue chain is Bifunctional protein HldE (477 aa).

The interval 1-318 (MKVTLPEFER…ENAVRGRADT (318 aa)) is ribokinase. Residue Lys179 is modified to N6-acetyllysine. 195-198 (NLSE) contacts ATP. Asp264 is an active-site residue. Residues 344–477 (MTNGVFDILH…IKKIQLDKKG (134 aa)) form a cytidylyltransferase region.

It in the N-terminal section; belongs to the carbohydrate kinase PfkB family. This sequence in the C-terminal section; belongs to the cytidylyltransferase family. As to quaternary structure, homodimer.

The catalysed reaction is D-glycero-beta-D-manno-heptose 7-phosphate + ATP = D-glycero-beta-D-manno-heptose 1,7-bisphosphate + ADP + H(+). The enzyme catalyses D-glycero-beta-D-manno-heptose 1-phosphate + ATP + H(+) = ADP-D-glycero-beta-D-manno-heptose + diphosphate. It functions in the pathway nucleotide-sugar biosynthesis; ADP-L-glycero-beta-D-manno-heptose biosynthesis; ADP-L-glycero-beta-D-manno-heptose from D-glycero-beta-D-manno-heptose 7-phosphate: step 1/4. It participates in nucleotide-sugar biosynthesis; ADP-L-glycero-beta-D-manno-heptose biosynthesis; ADP-L-glycero-beta-D-manno-heptose from D-glycero-beta-D-manno-heptose 7-phosphate: step 3/4. Its function is as follows. Catalyzes the phosphorylation of D-glycero-D-manno-heptose 7-phosphate at the C-1 position to selectively form D-glycero-beta-D-manno-heptose-1,7-bisphosphate. Functionally, catalyzes the ADP transfer from ATP to D-glycero-beta-D-manno-heptose 1-phosphate, yielding ADP-D-glycero-beta-D-manno-heptose. The protein is Bifunctional protein HldE of Escherichia coli O81 (strain ED1a).